A 1407-amino-acid polypeptide reads, in one-letter code: ABC transporter B family member 6 (1407 aa).

Residues 18-65 (LTPVSEVSEPPESPSPYLDPGAEHGGTGTAAQADDEEEMEEPEEMEPP) form a disordered region. The span at 50–63 (ADDEEEMEEPEEME) shows a compositional bias: acidic residues. 4 helical membrane-spanning segments follow: residues 84–104 (VLMV…IVYL), 139–159 (IVYI…CWIL), 212–231 (VGNY…IGFV), and 236–258 (IALI…NIFL). An ABC transmembrane type-1 1 domain is found at 86–379 (MVFGSVAAAA…AATNFYSFDQ (294 aa)). Asn-291 carries an N-linked (GlcNAc...) asparagine glycan. The next 2 helical transmembrane spans lie at 310-330 (GILI…LAIC) and 351-371 (GEII…NQAA). In terms of domain architecture, ABC transporter 1 spans 412 to 647 (IEFRNVYFSY…GNLYAELLKC (236 aa)). 447 to 454 (GRNGSGKS) is an ATP binding site. 2 N-linked (GlcNAc...) asparagine glycosylation sites follow: Asn-449 and Asn-663. Disordered regions lie at residues 670-696 (AERD…SLQR) and 709-815 (NSEE…DGQH). A glycan (N-linked (GlcNAc...) asparagine) is linked at Asn-727. The segment covering 733–755 (VGEKEPTIKRQDSFEMRLPELPK) has biased composition (basic and acidic residues). Over residues 761–770 (PQRQKSNGSD) the composition is skewed to polar residues. An N-linked (GlcNAc...) asparagine glycan is attached at Asn-767. The 289-residue stretch at 835 to 1123 (AVLGSIGAAI…PFGLAPYILK (289 aa)) folds into the ABC transmembrane type-1 2 domain. 6 helical membrane passes run 840–860 (IGAA…ALVV), 880–900 (LIIA…HFYF), 958–978 (IFIQ…LLGW), 982–1002 (LVAL…KLWL), 1061–1081 (IGFA…LLLW), and 1102–1122 (MVFS…PYIL). An ABC transporter 2 domain is found at 1158-1395 (IELKNIDFCY…NGLYVRLMQP (238 aa)). A glycan (N-linked (GlcNAc...) asparagine) is linked at Asn-1178. An ATP-binding site is contributed by 1193–1200 (GVSGSGKS). Asn-1260 and Asn-1346 each carry an N-linked (GlcNAc...) asparagine glycan.

It belongs to the ABC transporter superfamily. ABCB family. Multidrug resistance exporter (TC 3.A.1.201) subfamily. Expressed in aerial tissues.

It is found in the membrane. It carries out the reaction (indol-3-yl)acetate(in) + ATP + H2O = (indol-3-yl)acetate(out) + ADP + phosphate + H(+). In terms of biological role, probable auxin efflux transporter that contributes, together with ABCB20 and in a FKBP42/TWD1-dependent manner, to the regulation of leaf position and morphology, internode distribution, roots development, and inflorescence organization, probably by modulating auxin repartition. In Arabidopsis thaliana (Mouse-ear cress), this protein is ABC transporter B family member 6.